A 672-amino-acid polypeptide reads, in one-letter code: Amidase chyE (672 aa).

The active-site Nucleophile is Cys2. The 218-residue stretch at 2-219 (CGISAFLCHP…PGHYLISRPN (218 aa)) folds into the Glutamine amidotransferase type-2 domain. In terms of domain architecture, Asparagine synthetase spans 250–639 (VRKRLLEAVK…TQEAVEKAFT (390 aa)).

Belongs to the asparagine synthetase family.

It participates in pigment biosynthesis. Its function is as follows. Amidase; part of the gene cluster that mediates the biosynthesis of the yellow pigment chrysogine. the NRPS chyA mediates the condensation of anthranilic acid and alanine into the intermediate 2-(2-aminopropanamido)benzoic acid. The remainder of the pathway is highly branched yielding at least 13 chrysogine-related compounds. The malonyl transferase chyE converts 2-(2-aminopropanamido)benzoic acid and 2-(2-aminopropanamido)benzamidine into 2-(2-(2-carboxyacetamido)propanamido)benzoic acid and 3-((1-((2-carbamoylphenyl)amino)-1-oxopropan-2-yl)amino)-3-oxopropanoic acid, respectively. ChyD is an amidase, being responsible for the amidation of the carboxylic acid moiety of 2-(2-aminopropanamido)benzoic acid, 2-(2-(2-carboxyacetamido)propanamido)benzoic acid and 2-(2-((4-amino-1-carboxy-4-oxobutyl)amino)propanamido)benzoic acid. ChyC is involved in the same reactions as ChyD, but plays a more minor role in the amidation reactions compared to chyD. The oxidoreductases chyH and chyM are involved in oxidation reactions that form N-pyruvoylanthranilamide from 2-(2-aminopropanamido)benzamidine and (1-((2-carbamoylphenyl)amino)-1-oxopropan-2-yl)glutamine, respectively. N-pyruvoylanthranilamide is further converted via two further branches in the pathway, yielding chrysogine and additional chrysogine-related coumpounds. Chrysogine is likely formed by a spontaneous ring closure from N-pyruvoylanthranilamide. This is Amidase chyE from Penicillium rubens (strain ATCC 28089 / DSM 1075 / NRRL 1951 / Wisconsin 54-1255) (Penicillium chrysogenum).